The following is a 558-amino-acid chain: 2-isopropylmalate synthase (558 aa).

The Pyruvate carboxyltransferase domain occupies 30 to 303 (PIWCSVDLRD…DPELDCRDIE (274 aa)). D39, H242, H244, and N278 together coordinate Mg(2+). The interval 437 to 558 (QPNARIKFVD…ANRVLEERAK (122 aa)) is regulatory domain.

This sequence belongs to the alpha-IPM synthase/homocitrate synthase family. LeuA type 2 subfamily. In terms of assembly, homodimer. Mg(2+) is required as a cofactor.

Its subcellular location is the cytoplasm. It catalyses the reaction 3-methyl-2-oxobutanoate + acetyl-CoA + H2O = (2S)-2-isopropylmalate + CoA + H(+). It functions in the pathway amino-acid biosynthesis; L-leucine biosynthesis; L-leucine from 3-methyl-2-oxobutanoate: step 1/4. Its function is as follows. Catalyzes the condensation of the acetyl group of acetyl-CoA with 3-methyl-2-oxobutanoate (2-ketoisovalerate) to form 3-carboxy-3-hydroxy-4-methylpentanoate (2-isopropylmalate). This Agrobacterium fabrum (strain C58 / ATCC 33970) (Agrobacterium tumefaciens (strain C58)) protein is 2-isopropylmalate synthase.